The sequence spans 567 residues: Dihydroxy-acid dehydratase 3 (567 aa).

Residue C57 coordinates [2Fe-2S] cluster. D89 is a binding site for Mg(2+). Residue C130 coordinates [2Fe-2S] cluster. Mg(2+) is bound by residues D131 and K132. K132 carries the N6-carboxylysine modification. Residue C202 coordinates [2Fe-2S] cluster. Mg(2+) is bound at residue E454. The active-site Proton acceptor is the S480.

Belongs to the IlvD/Edd family. As to quaternary structure, homodimer. Requires [2Fe-2S] cluster as cofactor. Mg(2+) serves as cofactor.

The enzyme catalyses (2R)-2,3-dihydroxy-3-methylbutanoate = 3-methyl-2-oxobutanoate + H2O. It carries out the reaction (2R,3R)-2,3-dihydroxy-3-methylpentanoate = (S)-3-methyl-2-oxopentanoate + H2O. Its pathway is amino-acid biosynthesis; L-isoleucine biosynthesis; L-isoleucine from 2-oxobutanoate: step 3/4. It participates in amino-acid biosynthesis; L-valine biosynthesis; L-valine from pyruvate: step 3/4. Its function is as follows. Functions in the biosynthesis of branched-chain amino acids. Catalyzes the dehydration of (2R,3R)-2,3-dihydroxy-3-methylpentanoate (2,3-dihydroxy-3-methylvalerate) into 2-oxo-3-methylpentanoate (2-oxo-3-methylvalerate) and of (2R)-2,3-dihydroxy-3-methylbutanoate (2,3-dihydroxyisovalerate) into 2-oxo-3-methylbutanoate (2-oxoisovalerate), the penultimate precursor to L-isoleucine and L-valine, respectively. The polypeptide is Dihydroxy-acid dehydratase 3 (Aromatoleum aromaticum (strain DSM 19018 / LMG 30748 / EbN1) (Azoarcus sp. (strain EbN1))).